Consider the following 149-residue polypeptide: D-aminoacyl-tRNA deacylase (149 aa).

Positions 137–138 match the Gly-cisPro motif, important for rejection of L-amino acids motif; sequence GP.

It belongs to the DTD family. In terms of assembly, homodimer.

Its subcellular location is the cytoplasm. It carries out the reaction glycyl-tRNA(Ala) + H2O = tRNA(Ala) + glycine + H(+). The catalysed reaction is a D-aminoacyl-tRNA + H2O = a tRNA + a D-alpha-amino acid + H(+). Its function is as follows. An aminoacyl-tRNA editing enzyme that deacylates mischarged D-aminoacyl-tRNAs. Also deacylates mischarged glycyl-tRNA(Ala), protecting cells against glycine mischarging by AlaRS. Acts via tRNA-based rather than protein-based catalysis; rejects L-amino acids rather than detecting D-amino acids in the active site. By recycling D-aminoacyl-tRNA to D-amino acids and free tRNA molecules, this enzyme counteracts the toxicity associated with the formation of D-aminoacyl-tRNA entities in vivo and helps enforce protein L-homochirality. The sequence is that of D-aminoacyl-tRNA deacylase from Paracoccus denitrificans (strain Pd 1222).